A 154-amino-acid polypeptide reads, in one-letter code: Ribonuclease 1 (154 aa).

Belongs to the BetVI family.

The protein localises to the cytoplasm. Functionally, catalyzes the two-stage endonucleolytic cleavage to 3'-phosphomononucleotides and 3'-phosphooligonucleotides with 2',3'-cyclic phosphate intermediates. The sequence is that of Ribonuclease 1 from Panax ginseng (Korean ginseng).